A 325-amino-acid polypeptide reads, in one-letter code: DNA-directed RNA polymerase subunit alpha (325 aa).

The interval 1-231 is alpha N-terminal domain (alpha-NTD); sequence MQTSLLKPKI…DQLSVFAALE (231 aa). The interval 246 to 325 is alpha C-terminal domain (alpha-CTD); sequence IDPILLRPVD…ENWPPAGLDK (80 aa).

It belongs to the RNA polymerase alpha chain family. In terms of assembly, homodimer. The RNAP catalytic core consists of 2 alpha, 1 beta, 1 beta' and 1 omega subunit. When a sigma factor is associated with the core the holoenzyme is formed, which can initiate transcription.

It carries out the reaction RNA(n) + a ribonucleoside 5'-triphosphate = RNA(n+1) + diphosphate. In terms of biological role, DNA-dependent RNA polymerase catalyzes the transcription of DNA into RNA using the four ribonucleoside triphosphates as substrates. This is DNA-directed RNA polymerase subunit alpha from Burkholderia orbicola (strain MC0-3).